Reading from the N-terminus, the 89-residue chain is Protein S100-A8 (89 aa).

At Ala2 the chain carries N-acetylalanine. EF-hand domains are found at residues 13-48 (IEVY…FVQN) and 46-81 (VQNK…VGVA). Residues His17 and His27 each coordinate Zn(2+). Residue Asp33 participates in Ca(2+) binding. An S-nitrosocysteine modification is found at Cys42. Residues Asp59, Asn61, Asp63, and Glu70 each coordinate Ca(2+). His83 is a binding site for Zn(2+).

This sequence belongs to the S-100 family. In terms of assembly, homodimer. Preferentially exists as a heterodimer or heterotetramer with S100A9 known as calprotectin (S100A8/A9). S100A8 interacts with AGER, ATP2A2 and with the heterodimeric complex formed by TLR4 and LY96. Calprotectin (S100A8/9) interacts with CEACAM3 and tubulin filaments in a calcium-dependent manner. Heterotetrameric calprotectin (S100A8/A9) interacts with ANXA6 and associates with tubulin filaments in activated monocytes. S100A8 and calprotectin (S100A8/9) interact with NCF2/P67PHOX, RAC1 and RAC2. Calprotectin (S100A8/9) interacts with CYBA and CYBB. Calprotectin (S100A8/9) interacts with NOS2 to form the iNOS-S100A8/A9 transnitrosylase complex. Calprotectin (S100A8/9) interacts with CD69.

It is found in the secreted. It localises to the cytoplasm. The protein localises to the cytoskeleton. The protein resides in the cell membrane. Its function is as follows. S100A8 is a calcium- and zinc-binding protein which plays a prominent role in the regulation of inflammatory processes and immune response. It can induce neutrophil chemotaxis and adhesion. Predominantly found as calprotectin (S100A8/A9) which has a wide plethora of intra- and extracellular functions. The intracellular functions include: facilitating leukocyte arachidonic acid trafficking and metabolism, modulation of the tubulin-dependent cytoskeleton during migration of phagocytes and activation of the neutrophilic NADPH-oxidase. Also participates in regulatory T-cell differentiation together with CD69. Activates NADPH-oxidase by facilitating the enzyme complex assembly at the cell membrane, transferring arachidonic acid, an essential cofactor, to the enzyme complex and S100A8 contributes to the enzyme assembly by directly binding to NCF2/P67PHOX. The extracellular functions involve pro-inflammatory, antimicrobial, oxidant-scavenging and apoptosis-inducing activities. Its pro-inflammatory activity includes recruitment of leukocytes, promotion of cytokine and chemokine production, and regulation of leukocyte adhesion and migration. Acts as an alarmin or a danger associated molecular pattern (DAMP) molecule and stimulates innate immune cells via binding to pattern recognition receptors such as Toll-like receptor 4 (TLR4) and receptor for advanced glycation endproducts (AGER). Binding to TLR4 and AGER activates the MAP-kinase and NF-kappa-B signaling pathways resulting in the amplification of the pro-inflammatory cascade. Has antimicrobial activity towards bacteria and fungi and exerts its antimicrobial activity probably via chelation of Zn(2+) which is essential for microbial growth. Can induce cell death via autophagy and apoptosis and this occurs through the cross-talk of mitochondria and lysosomes via reactive oxygen species (ROS) and the process involves BNIP3. Can regulate neutrophil number and apoptosis by an anti-apoptotic effect; regulates cell survival via ITGAM/ITGB and TLR4 and a signaling mechanism involving MEK-ERK. Its role as an oxidant scavenger has a protective role in preventing exaggerated tissue damage by scavenging oxidants. The iNOS-S100A8/A9 transnitrosylase complex is proposed to direct selective inflammatory stimulus-dependent S-nitrosylation of multiple targets such as GAPDH, ANXA5, EZR, MSN and VIM by recognizing a [IL]-x-C-x-x-[DE] motif; S100A8 seems to contribute to S-nitrosylation site selectivity. The chain is Protein S100-A8 (S100a8) from Rattus norvegicus (Rat).